A 925-amino-acid chain; its full sequence is Aspulvinone E synthetase melA (925 aa).

Positions 11–434 are adenylation (A) domain; sequence ETAAARNGDG…GGRAKETIII (424 aa). A Carrier domain is found at 564-644; sequence SPKNDFEKGL…ELAAALDNLY (81 aa). Ser601 bears the O-(pantetheine 4'-phosphoryl)serine mark. The interval 663 to 923 is thioesterase (TE) domain; that stretch reads PLWLVHPGAG…KILRSALAER (261 aa).

It belongs to the NRP synthetase family.

The protein localises to the cytoplasm. It catalyses the reaction 2 3-(4-hydroxyphenyl)pyruvate + AH2 + 2 ATP + O2 = aspulvinone E + A + 2 AMP + CO2 + 2 diphosphate + H2O + H(+). Functionally, nonribosomal peptide synthase; part of the gene cluster that mediates the biosynthesis of Asp-melanin, a pigment that confers resistance against UV light and hampers phagocytosis by soil amoeba. The nonribosomal peptide synthase melA converts 4-hydroxyphenylpyruvate (4-HPPA) to aspulvinone E. The tyrosinase tyrP then performs hydroxylations of both aromatic moieties of aspulvinone E. The product of tyrP is highly unstable, and, due to the high reactivity of methides and ortho-diquinones, the polymeric Asp-melanin forms spontaneously. The polypeptide is Aspulvinone E synthetase melA (Aspergillus terreus (strain NIH 2624 / FGSC A1156)).